Consider the following 487-residue polypeptide: Zinc finger and BTB domain-containing protein 32 (487 aa).

The 59-residue stretch at 29-87 (CDTLITVGSQEFPAHSLVLAGVSQQLGRRGQWALGEGISPSTFAQLLNFVYGESVELQP) folds into the BTB domain. The span at 112–166 (ARGDRAKKPDPGLKKHQEEPEKPSRNPERELGDPGEKQKPEQVSRTGGREQEMLH) shows a compositional bias: basic and acidic residues. 2 disordered regions span residues 112 to 244 (ARGD…TSVT) and 308 to 371 (QNQL…ARSR). The span at 308-320 (QNQLASSSPTPGS) shows a compositional bias: polar residues. Positions 357-369 (PPRPHPPPAPPAR) are enriched in pro residues. 3 C2H2-type zinc fingers span residues 373-395 (YACSVCGKRFSLKHQMETHYRVH), 401-423 (FSCSLCPQRSRDFSAMTKHLRTH), and 428-450 (YRCSLCGAGCPSLASMQAHMRGH). The tract at residues 468 to 487 (SSSRPSRPSTSPCCPSSSTT) is disordered.

Belongs to the krueppel C2H2-type zinc-finger protein family. In terms of assembly, homodimer (via PTB domain). Interacts with the N-terminal of FANCC. Interacts with ZBTB16. Interacts with GATA3. Predominantly expressed in testis. Some isoforms are ubiquitously expressed.

Its subcellular location is the nucleus. Its function is as follows. DNA-binding protein that binds to the to a 5'-TGTACAGTGT-3' core sequence. May function as a transcriptional transactivator and transcriptional repressor. Probably exerts its repressor effect by preventing GATA3 from binding to DNA. May play a role in regulating the differentiation and activation of helper T-cells. This Homo sapiens (Human) protein is Zinc finger and BTB domain-containing protein 32 (ZBTB32).